Here is a 157-residue protein sequence, read N- to C-terminus: Ribosome maturation factor RimP (157 aa).

This sequence belongs to the RimP family.

The protein resides in the cytoplasm. In terms of biological role, required for maturation of 30S ribosomal subunits. The sequence is that of Ribosome maturation factor RimP from Petrotoga mobilis (strain DSM 10674 / SJ95).